The chain runs to 520 residues: Maturase K (520 aa).

The protein belongs to the intron maturase 2 family. MatK subfamily.

It localises to the plastid. It is found in the chloroplast. In terms of biological role, usually encoded in the trnK tRNA gene intron. Probably assists in splicing its own and other chloroplast group II introns. The chain is Maturase K from Maianthemum dilatatum (False lily-of-the-valley).